Consider the following 33-residue polypeptide: Kappa-sparatoxin-Hv1a (33 aa).

Disulfide bonds link Cys-2-Cys-17, Cys-9-Cys-22, and Cys-16-Cys-27. Position 33 is a tryptophan amide (Trp-33).

Expressed by the venom gland.

It is found in the secreted. In terms of biological role, blocks transient outward voltage-gated potassium channels in rat ventricular myocytes (thus prolonging action-potential duration) and rat Kv4.2/KCNA4 channels expressed in Xenopus oocytes. Is also a weak blocker of calcium channels in rat cerebellar granule cells. This chain is Kappa-sparatoxin-Hv1a, found in Heteropoda venatoria (Brown huntsman spider).